Consider the following 448-residue polypeptide: Tubulin alpha-4A chain (448 aa).

An MREC motif motif is present at residues 1–4 (MREC). Gln11 contacts GTP. Lys40 carries the N6-acetyllysine modification. Ser48 bears the Phosphoserine mark. Glu71 contributes to the GTP binding site. Glu71 is a binding site for Mg(2+). At Tyr83 the chain carries 3'-nitrotyrosine. Positions 140, 144, 145, 179, 206, and 228 each coordinate GTP. The active site involves Glu254. Tyr432 carries the post-translational modification Phosphotyrosine. At Ser439 the chain carries Phosphoserine.

This sequence belongs to the tubulin family. In terms of assembly, dimer of alpha and beta chains. A typical microtubule is a hollow water-filled tube with an outer diameter of 25 nm and an inner diameter of 15 nM. Alpha-beta heterodimers associate head-to-tail to form protofilaments running lengthwise along the microtubule wall with the beta-tubulin subunit facing the microtubule plus end conferring a structural polarity. Microtubules usually have 13 protofilaments but different protofilament numbers can be found in some organisms and specialized cells. Interacts with CFAP157. The cofactor is Mg(2+). Some glutamate residues at the C-terminus are polyglycylated, resulting in polyglycine chains on the gamma-carboxyl group. Glycylation is mainly limited to tubulin incorporated into axonemes (cilia and flagella) whereas glutamylation is prevalent in neuronal cells, centrioles, axonemes, and the mitotic spindle. Both modifications can coexist on the same protein on adjacent residues, and lowering polyglycylation levels increases polyglutamylation, and reciprocally. Cilia and flagella glycylation is required for their stability and maintenance. Flagella glycylation controls sperm motility. Post-translationally, some glutamate residues at the C-terminus are polyglutamylated, resulting in polyglutamate chains on the gamma-carboxyl group. Polyglutamylation plays a key role in microtubule severing by spastin (SPAST). SPAST preferentially recognizes and acts on microtubules decorated with short polyglutamate tails: severing activity by SPAST increases as the number of glutamates per tubulin rises from one to eight, but decreases beyond this glutamylation threshold. Glutamylation is also involved in cilia motility. In terms of processing, acetylation of alpha chains at Lys-40 is located inside the microtubule lumen. This modification has been correlated with increased microtubule stability, intracellular transport and ciliary assembly. Methylation of alpha chains at Lys-40 is found in mitotic microtubules and is required for normal mitosis and cytokinesis contributing to genomic stability. Post-translationally, although this tubulin does not encode a C-terminal tyrosine, a C-terminal tyrosine can be added post-translationally by the tubulin tyrosine ligase (TTL). It can then undergo a detyrosination cycle by the tubulin tyrosine carboxypeptidase (MATCAP1/KIAA0895L).

It is found in the cytoplasm. The protein resides in the cytoskeleton. It catalyses the reaction GTP + H2O = GDP + phosphate + H(+). Tubulin is the major constituent of microtubules, a cylinder consisting of laterally associated linear protofilaments composed of alpha- and beta-tubulin heterodimers. Microtubules grow by the addition of GTP-tubulin dimers to the microtubule end, where a stabilizing cap forms. Below the cap, tubulin dimers are in GDP-bound state, owing to GTPase activity of alpha-tubulin. This is Tubulin alpha-4A chain (TUBA4A) from Macaca fascicularis (Crab-eating macaque).